The chain runs to 171 residues: CS1 fimbrial subunit A (171 aa).

Positions 1–23 are cleaved as a signal peptide; that stretch reads MKLKKTIGAMALATLFATMGASA.

Belongs to the fimbrial CS1 protein family.

Its subcellular location is the fimbrium. Its function is as follows. Fimbriae (also called pili), polar filaments radiating from the surface of the bacterium to a length of 0.5-1.5 micrometers and numbering 100-300 per cell, enable bacteria to colonize the epithelium of specific host organs. The protein is CS1 fimbrial subunit A (csoA) of Escherichia coli.